The sequence spans 502 residues: Xylulose kinase (502 aa).

82–83 (MH) contacts substrate. Asp240 acts as the Proton acceptor in catalysis.

It belongs to the FGGY kinase family.

It catalyses the reaction D-xylulose + ATP = D-xylulose 5-phosphate + ADP + H(+). Functionally, catalyzes the phosphorylation of D-xylulose to D-xylulose 5-phosphate. The polypeptide is Xylulose kinase (Levilactobacillus brevis (Lactobacillus brevis)).